Reading from the N-terminus, the 425-residue chain is Enolase (425 aa).

A (2R)-2-phosphoglycerate-binding site is contributed by Gln162. The active-site Proton donor is the Glu204. Mg(2+) contacts are provided by Asp241, Glu282, and Asp309. Lys334, Arg363, Ser364, and Lys385 together coordinate (2R)-2-phosphoglycerate. Catalysis depends on Lys334, which acts as the Proton acceptor.

The protein belongs to the enolase family. Mg(2+) serves as cofactor.

The protein resides in the cytoplasm. It is found in the secreted. It localises to the cell surface. The enzyme catalyses (2R)-2-phosphoglycerate = phosphoenolpyruvate + H2O. It functions in the pathway carbohydrate degradation; glycolysis; pyruvate from D-glyceraldehyde 3-phosphate: step 4/5. Functionally, catalyzes the reversible conversion of 2-phosphoglycerate (2-PG) into phosphoenolpyruvate (PEP). It is essential for the degradation of carbohydrates via glycolysis. This is Enolase from Corynebacterium efficiens (strain DSM 44549 / YS-314 / AJ 12310 / JCM 11189 / NBRC 100395).